Reading from the N-terminus, the 146-residue chain is Probable U6 snRNA-associated Sm-like protein LSm4 (146 aa).

The 74-residue stretch at 2–75 folds into the Sm domain; it reads LPLSLLKTAQ…IKYLRVPDEV (74 aa). Basic and acidic residues predominate over residues 80 to 91; that stretch reads QEEAKSRTDRKP. The interval 80–146 is disordered; it reads QEEAKSRTDR…GGRGGGRGRG (67 aa). Residues 137–146 show a composition bias toward gly residues; the sequence is GGRGGGRGRG.

Belongs to the snRNP Sm proteins family. In terms of assembly, LSm subunits form a heteromer with a doughnut shape.

The protein localises to the nucleus. In terms of biological role, binds specifically to the 3'-terminal U-tract of U6 snRNA. In Nicotiana tabacum (Common tobacco), this protein is Probable U6 snRNA-associated Sm-like protein LSm4.